A 1590-amino-acid polypeptide reads, in one-letter code: Pentafunctional AROM polypeptide (1590 aa).

The segment at 1 to 400 (MSTANGSSPT…HEPKASSVDD (400 aa)) is 3-dehydroquinate synthase. NAD(+) contacts are provided by residues 49 to 51 (DTN), 96 to 99 (EGSK), 127 to 129 (GGV), and Asp-132. Arg-143 is a 7-phospho-2-dehydro-3-deoxy-D-arabino-heptonate binding site. Residue 152-153 (TT) coordinates NAD(+). 7-phospho-2-dehydro-3-deoxy-D-arabino-heptonate contacts are provided by Asp-159 and Lys-165. Lys-174 lines the NAD(+) pocket. Asn-175 is a 7-phospho-2-dehydro-3-deoxy-D-arabino-heptonate binding site. NAD(+) is bound by residues 192–195 (FLNT) and Asn-203. Zn(2+) is bound at residue Glu-207. 7-phospho-2-dehydro-3-deoxy-D-arabino-heptonate contacts are provided by residues 207-210 (EVIK) and Lys-266. The Proton acceptor; for 3-dehydroquinate synthase activity role is filled by Glu-276. Residues 280–284 (RNLLN) and His-287 each bind 7-phospho-2-dehydro-3-deoxy-D-arabino-heptonate. Residue His-287 coordinates Zn(2+). His-291 acts as the Proton acceptor; for 3-dehydroquinate synthase activity in catalysis. 7-phospho-2-dehydro-3-deoxy-D-arabino-heptonate is bound by residues His-303 and Lys-372. His-303 is a binding site for Zn(2+). Positions 413 to 856 (VQPGVRPGLK…WDVLSGVFGV (444 aa)) are EPSP synthase. Cys-838 functions as the For EPSP synthase activity in the catalytic mechanism. Residues 876 to 1070 (NRSVFVIGMR…KAKPHSFFVS (195 aa)) are shikimate kinase. Position 883 to 890 (883 to 890 (GMRGAGKS)) interacts with ATP. The interval 1071 to 1285 (LTVPNITAHT…AAPGQLTAAE (215 aa)) is 3-dehydroquinase. His-1187 functions as the Proton acceptor; for 3-dehydroquinate dehydratase activity in the catalytic mechanism. Lys-1215 functions as the Schiff-base intermediate with substrate; for 3-dehydroquinate dehydratase activity in the catalytic mechanism. Positions 1298–1590 (KRKFYLFGKP…IVMNGTSDSS (293 aa)) are shikimate dehydrogenase.

The protein in the N-terminal section; belongs to the sugar phosphate cyclases superfamily. Dehydroquinate synthase family. It in the 2nd section; belongs to the EPSP synthase family. This sequence in the 3rd section; belongs to the shikimate kinase family. In the 4th section; belongs to the type-I 3-dehydroquinase family. The protein in the C-terminal section; belongs to the shikimate dehydrogenase family. Homodimer. It depends on Zn(2+) as a cofactor.

The protein localises to the cytoplasm. It catalyses the reaction 7-phospho-2-dehydro-3-deoxy-D-arabino-heptonate = 3-dehydroquinate + phosphate. The catalysed reaction is 3-dehydroquinate = 3-dehydroshikimate + H2O. It carries out the reaction shikimate + NADP(+) = 3-dehydroshikimate + NADPH + H(+). The enzyme catalyses shikimate + ATP = 3-phosphoshikimate + ADP + H(+). It catalyses the reaction 3-phosphoshikimate + phosphoenolpyruvate = 5-O-(1-carboxyvinyl)-3-phosphoshikimate + phosphate. It functions in the pathway metabolic intermediate biosynthesis; chorismate biosynthesis; chorismate from D-erythrose 4-phosphate and phosphoenolpyruvate: step 2/7. Its pathway is metabolic intermediate biosynthesis; chorismate biosynthesis; chorismate from D-erythrose 4-phosphate and phosphoenolpyruvate: step 3/7. It participates in metabolic intermediate biosynthesis; chorismate biosynthesis; chorismate from D-erythrose 4-phosphate and phosphoenolpyruvate: step 4/7. The protein operates within metabolic intermediate biosynthesis; chorismate biosynthesis; chorismate from D-erythrose 4-phosphate and phosphoenolpyruvate: step 5/7. It functions in the pathway metabolic intermediate biosynthesis; chorismate biosynthesis; chorismate from D-erythrose 4-phosphate and phosphoenolpyruvate: step 6/7. The AROM polypeptide catalyzes 5 consecutive enzymatic reactions in prechorismate polyaromatic amino acid biosynthesis. This Pyricularia oryzae (strain 70-15 / ATCC MYA-4617 / FGSC 8958) (Rice blast fungus) protein is Pentafunctional AROM polypeptide.